Here is a 429-residue protein sequence, read N- to C-terminus: uncharacterized protein (429 aa).

Residues S116, D179, and H206 each act as charge relay system in the active site.

The protein belongs to the AB hydrolase 3 family.

The protein resides in the cytoplasm. Its subcellular location is the nucleus. This is an uncharacterized protein from Schizosaccharomyces pombe (strain 972 / ATCC 24843) (Fission yeast).